Consider the following 472-residue polypeptide: 2-methylcitrate synthase, mitochondrial (472 aa).

The transit peptide at 1–29 (MALNLTSSRRALGSLKPLTRAAFSGVRGY) directs the protein to the mitochondrion. 2 residues coordinate CoA: Arg75 and Lys193. His271 serves as a coordination point for oxaloacetate. Residue Leu306 participates in CoA binding. His307 is a catalytic residue. CoA-binding residues include Val348, Gly350, and Tyr351. Oxaloacetate-binding residues include His353 and Arg362. The active site involves His353. Thr402, Lys403, and Asn408 together coordinate CoA. Residue Asp410 is part of the active site. The oxaloacetate site is built by Arg436 and Arg456.

The protein belongs to the citrate synthase family. As to quaternary structure, homodimer.

The protein localises to the mitochondrion matrix. It catalyses the reaction propanoyl-CoA + oxaloacetate + H2O = (2S,3S)-2-methylcitrate + CoA + H(+). The enzyme catalyses oxaloacetate + acetyl-CoA + H2O = citrate + CoA + H(+). It participates in organic acid metabolism; propanoate degradation. Component of the methylcitrate cycle that catalyzes the synthesis of (2S,3S)-2-methylcitrate from propionyl-CoA and oxaloacetate. Plays an important role in detoxification of propionyl-CoA, an inhibitor of both primary and secondary metabolism. Also has citrate synthase activity using as substrates acetyl-CoA and oxaloacetate. This Gibberella moniliformis (Maize ear and stalk rot fungus) protein is 2-methylcitrate synthase, mitochondrial.